Here is a 477-residue protein sequence, read N- to C-terminus: Oleate hydroxylase FAH12 (477 aa).

The segment at 26–48 (YESSAAVSPAESPRTSASSTSLS) is disordered. Low complexity predominate over residues 27 to 48 (ESSAAVSPAESPRTSASSTSLS). A run of 2 helical transmembrane segments spans residues 101–118 (AYVLRDLLCLSTTFYLFH) and 133–153 (FVLWSIYTVLQGLFATGLWVI). Positions 155–159 (HECGH) match the Histidine box-1 motif. Residues 167–187 (FISDLTGWVIHSALLVPYFSW) form a helical membrane-spanning segment. The Histidine box-2 motif lies at 191 to 195 (HSAHH). Helical transmembrane passes span 234 to 254 (PIYTALHLVGKQLIGWPSYLM), 299 to 319 (YIVLSDIGLGLAIAALVYLGN), and 327 to 347 (AVWYFLPYLWVNHWLVAITFL).

The protein belongs to the fatty acid desaturase type 1 family.

It localises to the microsome membrane. The enzyme catalyses (9Z)-octadecenoate + AH2 + O2 = (12R)-hydroxy-(9Z)-octadecenoate + A + H2O. Its pathway is lipid metabolism; monounsaturated fatty acid biosynthesis. Oleate hydroxylase involved in the biosynthesis of ricinoleate (12-hydroxy-cis-9-octadecenoate), that is present at high levels in C.purpurea sclerotium tissue. Exhibits delta(12) hydroxylase activity on 16C and 18C monounsaturated fatty acids (i.e. oleic and palmitoleic acids), and, to a lower extent, gamma(3) hydroxylase activity on ricinoleate. In Claviceps purpurea (Ergot fungus), this protein is Oleate hydroxylase FAH12.